The sequence spans 662 residues: Transketolase (662 aa).

A substrate-binding site is contributed by His28. Thiamine diphosphate contacts are provided by residues His68 and 115 to 117; that span reads GPL. Asp156 is a binding site for Mg(2+). Residues Gly157 and Asn186 each coordinate thiamine diphosphate. Positions 186 and 188 each coordinate Mg(2+). Substrate is bound by residues His261, Arg356, and Ser383. Position 261 (His261) interacts with thiamine diphosphate. Glu410 (proton donor) is an active-site residue. A thiamine diphosphate-binding site is contributed by Phe436. Substrate contacts are provided by His460, Asp468, and Arg519.

This sequence belongs to the transketolase family. As to quaternary structure, homodimer. Mg(2+) is required as a cofactor. Requires Ca(2+) as cofactor. It depends on Mn(2+) as a cofactor. The cofactor is Co(2+). Thiamine diphosphate serves as cofactor.

It catalyses the reaction D-sedoheptulose 7-phosphate + D-glyceraldehyde 3-phosphate = aldehydo-D-ribose 5-phosphate + D-xylulose 5-phosphate. The protein operates within carbohydrate biosynthesis; Calvin cycle. Its pathway is carbohydrate degradation; pentose phosphate pathway. Catalyzes the transfer of a two-carbon ketol group from a ketose donor to an aldose acceptor, via a covalent intermediate with the cofactor thiamine pyrophosphate. The polypeptide is Transketolase (tkt) (Staphylococcus epidermidis (strain ATCC 12228 / FDA PCI 1200)).